A 300-amino-acid chain; its full sequence is Metal tolerance protein 12 (300 aa).

The Cytoplasmic segment spans residues 1–26 (MESPESFSTMFMKPIRHILSEKKSRK). Residues 27–47 (IALFLLINTAYMVVEFVAGFM) traverse the membrane as a helical segment. Residues 48-50 (SNS) lie on the Vacuolar side of the membrane. Residues 51–71 (LGLISDACHMLFDCAALAIGL) traverse the membrane as a helical segment. Residues 72-91 (YASYISRLPANHQYNYGRGR) lie on the Cytoplasmic side of the membrane. The chain crosses the membrane as a helical span at residues 92–112 (FEVLSGYVNAVFLVLVGALIV). Residues 113 to 128 (LESIERILDPQEISTN) are Vacuolar-facing. Residues 129–149 (SLLVVSVGGLLVNIVGLIFFH) form a helical membrane-spanning segment. The Cytoplasmic segment spans residues 150-160 (EEHHHAHGGSG). A helical membrane pass occupies residues 161–181 (IFLHVLADTMGSVGVVISTLL). Residues 182-186 (IKYKG) are Vacuolar-facing. The helical transmembrane segment at 187 to 207 (WLVADPASSIFISILIIASVI) threads the bilayer. Residues 208–300 (PLLRNSAEIL…WTLQVESVNS (93 aa)) are Cytoplasmic-facing.

It belongs to the cation diffusion facilitator (CDF) transporter (TC 2.A.4) family. SLC30A subfamily.

It localises to the vacuole membrane. Functionally, involved in sequestration of excess metal in the cytoplasm into vacuoles to maintain metal homeostasis. In Arabidopsis thaliana (Mouse-ear cress), this protein is Metal tolerance protein 12 (MTP12).